A 472-amino-acid chain; its full sequence is Glutamine synthetase (472 aa).

Positions 17–101 (YDIKFVLLRF…LRCSIYEPST (85 aa)) constitute a GS beta-grasp domain. A GS catalytic domain is found at 109-472 (PRSIAIRAEN…HPVEFEMYYA (364 aa)). Mg(2+) contacts are provided by Glu-134 and Glu-136. Glu-212 provides a ligand contact to ATP. Positions 217 and 225 each coordinate Mg(2+). L-glutamate-binding positions include 269 to 270 (NG) and Gly-270. His-274 contributes to the Mg(2+) binding site. ATP contacts are provided by residues 276–278 (NMS) and Ser-278. L-glutamate contacts are provided by Arg-326, Glu-332, and Arg-344. Arg-344, Arg-349, and Lys-357 together coordinate ATP. Glu-362 provides a ligand contact to Mg(2+). Residue Arg-364 coordinates L-glutamate. An O-AMP-tyrosine modification is found at Tyr-402.

The protein belongs to the glutamine synthetase family. Oligomer of 12 subunits arranged in the form of two hexameric ring. Mg(2+) is required as a cofactor.

It is found in the cytoplasm. The catalysed reaction is L-glutamate + NH4(+) + ATP = L-glutamine + ADP + phosphate + H(+). With respect to regulation, the activity of this enzyme could be controlled by adenylation under conditions of abundant glutamine. In terms of biological role, catalyzes the ATP-dependent biosynthesis of glutamine from glutamate and ammonia. In Pasteurella multocida (strain Pm70), this protein is Glutamine synthetase.